The sequence spans 417 residues: Spermidine/putrescine import ATP-binding protein PotA (417 aa).

Residues 5–308 (IILKDLTKVF…PANRFVAQFV (304 aa)) enclose the ABC transporter domain. 37–44 (GPSGCGKT) is a binding site for ATP. The tract at residues 105 to 177 (DFNSKIKDNL…TALKCKKINK (73 aa)) is insert.

This sequence belongs to the ABC transporter superfamily. Spermidine/putrescine importer (TC 3.A.1.11.1) family. In terms of assembly, the complex is composed of two ATP-binding proteins (PotA), two transmembrane proteins (PotB and PotC) and a solute-binding protein (PotD).

The protein resides in the cell membrane. The enzyme catalyses ATP + H2O + polyamine-[polyamine-binding protein]Side 1 = ADP + phosphate + polyamineSide 2 + [polyamine-binding protein]Side 1.. Functionally, part of the ABC transporter complex PotABCD involved in spermidine/putrescine import. Responsible for energy coupling to the transport system. The polypeptide is Spermidine/putrescine import ATP-binding protein PotA (Aster yellows witches'-broom phytoplasma (strain AYWB)).